Consider the following 100-residue polypeptide: Biogenesis of lysosome-related organelles complex 1 subunit CNL1 (100 aa).

Residues 25–46 (SDRVKSLELEATRLVQRQNELV) adopt a coiled-coil conformation.

It belongs to the BLOC1S4 family. In terms of assembly, component of the biogenesis of lysosome-related organelles complex-1 (BLOC-1).

Its subcellular location is the cytoplasm. Its function is as follows. Component of the biogenesis of lysosome-related organelles complex-1 (BLOC-1), a complex that is involved in endosomal cargo sorting. This Candida glabrata (strain ATCC 2001 / BCRC 20586 / JCM 3761 / NBRC 0622 / NRRL Y-65 / CBS 138) (Yeast) protein is Biogenesis of lysosome-related organelles complex 1 subunit CNL1 (CLN1).